We begin with the raw amino-acid sequence, 214 residues long: Protein GrpE (214 aa).

Residues 1-13 (MKHTSEPTSQPDT) show a composition bias toward polar residues. The segment at 1 to 61 (MKHTSEPTSQ…AAVAEATIEP (61 aa)) is disordered. Positions 14–57 (QAAESAQSSAAAAGQAASAYSSQAQRASADAQAIAGDEAAVAEA) are enriched in low complexity.

Belongs to the GrpE family. Homodimer.

It localises to the cytoplasm. Its function is as follows. Participates actively in the response to hyperosmotic and heat shock by preventing the aggregation of stress-denatured proteins, in association with DnaK and GrpE. It is the nucleotide exchange factor for DnaK and may function as a thermosensor. Unfolded proteins bind initially to DnaJ; upon interaction with the DnaJ-bound protein, DnaK hydrolyzes its bound ATP, resulting in the formation of a stable complex. GrpE releases ADP from DnaK; ATP binding to DnaK triggers the release of the substrate protein, thus completing the reaction cycle. Several rounds of ATP-dependent interactions between DnaJ, DnaK and GrpE are required for fully efficient folding. This Ralstonia nicotianae (strain ATCC BAA-1114 / GMI1000) (Ralstonia solanacearum) protein is Protein GrpE.